The sequence spans 173 residues: Crossover junction endodeoxyribonuclease RuvC (173 aa).

Catalysis depends on residues aspartate 8, glutamate 67, and aspartate 139. Mg(2+)-binding residues include aspartate 8, glutamate 67, and aspartate 139.

The protein belongs to the RuvC family. As to quaternary structure, homodimer which binds Holliday junction (HJ) DNA. The HJ becomes 2-fold symmetrical on binding to RuvC with unstacked arms; it has a different conformation from HJ DNA in complex with RuvA. In the full resolvosome a probable DNA-RuvA(4)-RuvB(12)-RuvC(2) complex forms which resolves the HJ. Requires Mg(2+) as cofactor.

It localises to the cytoplasm. It catalyses the reaction Endonucleolytic cleavage at a junction such as a reciprocal single-stranded crossover between two homologous DNA duplexes (Holliday junction).. Its function is as follows. The RuvA-RuvB-RuvC complex processes Holliday junction (HJ) DNA during genetic recombination and DNA repair. Endonuclease that resolves HJ intermediates. Cleaves cruciform DNA by making single-stranded nicks across the HJ at symmetrical positions within the homologous arms, yielding a 5'-phosphate and a 3'-hydroxyl group; requires a central core of homology in the junction. The consensus cleavage sequence is 5'-(A/T)TT(C/G)-3'. Cleavage occurs on the 3'-side of the TT dinucleotide at the point of strand exchange. HJ branch migration catalyzed by RuvA-RuvB allows RuvC to scan DNA until it finds its consensus sequence, where it cleaves and resolves the cruciform DNA. This Shewanella amazonensis (strain ATCC BAA-1098 / SB2B) protein is Crossover junction endodeoxyribonuclease RuvC.